The sequence spans 31 residues: Cytochrome b6-f complex subunit 6 (31 aa).

The helical transmembrane segment at 4–26 (IVSYFGFLLTASTITPALFIGLS) threads the bilayer.

This sequence belongs to the PetL family. As to quaternary structure, the 4 large subunits of the cytochrome b6-f complex are cytochrome b6, subunit IV (17 kDa polypeptide, PetD), cytochrome f and the Rieske protein, while the 4 small subunits are PetG, PetL, PetM and PetN. The complex functions as a dimer.

The protein resides in the plastid. It localises to the chloroplast thylakoid membrane. In terms of biological role, component of the cytochrome b6-f complex, which mediates electron transfer between photosystem II (PSII) and photosystem I (PSI), cyclic electron flow around PSI, and state transitions. PetL is important for photoautotrophic growth as well as for electron transfer efficiency and stability of the cytochrome b6-f complex. In Nymphaea alba (White water-lily), this protein is Cytochrome b6-f complex subunit 6.